The chain runs to 601 residues: AT-rich interactive domain-containing protein 3A (601 aa).

Residues 1–224 (MKLQAVMETL…HMASQMPPPD (224 aa)) are disordered. Low complexity predominate over residues 60 to 89 (MAALAAMRAAAAGLGHPSSPGGSEDGPPIS). A phosphoserine mark is found at serine 78, serine 82, and serine 89. A Phosphothreonine modification is found at threonine 99. At serine 102 the chain carries Phosphoserine. Over residues 114–123 (GHAEGDRHLM) the composition is skewed to basic and acidic residues. Residue serine 127 is modified to Phosphoserine. The segment at 128-165 (DDDDTKSKWEEQELEELGEEEEEEEEEDDFEEEEEEEE) is acidic. Residues 139–166 (QELEELGEEEEEEEEEDDFEEEEEEEEG) show a composition bias toward acidic residues. Residues 243 to 335 (DPKRKEFLDD…YLYPYECERR (93 aa)) form the ARID domain. A phosphoserine mark is found at serine 358 and serine 367. Glycyl lysine isopeptide (Lys-Gly) (interchain with G-Cter in SUMO2) cross-links involve residues lysine 403, lysine 404, lysine 457, and lysine 467. The region spanning 449 to 546 (AALEQLREKL…GVLFAQPPPP (98 aa)) is the REKLES domain. The interval 450-493 (ALEQLREKLESTEPPEKKMALVADEQQRLMQRAVQQSFLAMTAQ) is important for nuclear localization. The homodimerization stretch occupies residues 495-518 (PMNIRINSQASESRQDSAVSLTSA). The important for cytoplasmic localization stretch occupies residues 542-562 (QPPPPTAPSAPGKGGVSSIGT). Residues 545 to 601 (PPTAPSAPGKGGVSSIGTNTTTGSRTGASGSTVSGGQVGLPGVSTPTMSSTSNNSLP) form a disordered region. Low complexity-rich tracts occupy residues 559–579 (SIGTNTTTGSRTGASGSTVSG) and 588–601 (STPTMSSTSNNSLP).

As to quaternary structure, homodimer. Heterodimer with ARID3B. Interacts with E2F1. Interacts with GTF2I and BTK. As to expression, B-cell specific in the adult. Expressed in B-cell progenitors, down-regulated in the immature B-cell stage, and is up-regulated again at later stages of B-lymphocyte differentiation.

Its subcellular location is the nucleus. It is found in the cytoplasm. Functionally, transcription factor involved in B-cell differentiation. Binds a VH promoter proximal site necessary for induced mu-heavy-chain transcription. Binds the minor groove of a restricted ATC sequence that is sufficient for nuclear matrix association. This sequence motif is present in matrix-associating regions (MARS) proximal to the promoter and flanking E mu. Activates E mu-driven transcription by binding these sites. May be involved in the control of cell cycle progression by the RB1/E2F1 pathway. The polypeptide is AT-rich interactive domain-containing protein 3A (Arid3a) (Mus musculus (Mouse)).